A 204-amino-acid polypeptide reads, in one-letter code: Thymidylate kinase (204 aa).

Residue 7-14 (GGEGVGKT) participates in ATP binding.

The protein belongs to the thymidylate kinase family.

The catalysed reaction is dTMP + ATP = dTDP + ADP. Functionally, phosphorylation of dTMP to form dTDP in both de novo and salvage pathways of dTTP synthesis. The protein is Thymidylate kinase of Synechococcus sp. (strain JA-3-3Ab) (Cyanobacteria bacterium Yellowstone A-Prime).